The primary structure comprises 228 residues: AA9 family lytic polysaccharide monooxygenase A (228 aa).

Residues histidine 1 and histidine 86 each contribute to the Cu(2+) site. A Methylhistidine modification is found at histidine 1. Intrachain disulfides connect cysteine 56/cysteine 178 and cysteine 97/cysteine 101. N-linked (GlcNAc...) asparagine glycosylation occurs at asparagine 138. O2 is bound by residues histidine 164 and glutamine 173. Tyrosine 175 lines the Cu(2+) pocket.

The protein belongs to the polysaccharide monooxygenase AA9 family. Cu(2+) is required as a cofactor. In terms of processing, the catalytically essential N-terminal histidine His-22 is post-translationally modified by methylation to prevent protonation of the histidine side chain, and protect the critical active site of the enzyme from oxidative damage.

The protein resides in the secreted. The enzyme catalyses [(1-&gt;4)-beta-D-glucosyl]n+m + reduced acceptor + O2 = 4-dehydro-beta-D-glucosyl-[(1-&gt;4)-beta-D-glucosyl]n-1 + [(1-&gt;4)-beta-D-glucosyl]m + acceptor + H2O.. Its activity is regulated as follows. Small amounts of H(2)O(2) boost LPMO activity, while higher amounts lead to inactivation of the enzyme. In terms of biological role, lytic polysaccharide monooxygenase (LPMO) that depolymerizes crystalline and amorphous polysaccharides via the oxidation of scissile alpha- or beta-(1-4)-glycosidic bonds, yielding C1 and C4 oxidation product. Catalysis by LPMOs requires the reduction of the active-site copper from Cu(II) to Cu(I) by a reducing agent and H(2)O(2) or O(2) as a cosubstrate. Is able to cleave cellulose and xylan to produce C1- and C4-oxidized products. In Thermoascus aurantiacus, this protein is AA9 family lytic polysaccharide monooxygenase A.